We begin with the raw amino-acid sequence, 1133 residues long: Eukaryotic translation initiation factor 3 subunit A (1133 aa).

One can recognise a PCI domain in the interval 317-498 (IQRMTSHVLI…HCVHFGTDLS (182 aa)). Coiled coils occupy residues 573–700 (KKIE…YFER) and 784–886 (EEER…EADS). Residues 810–893 (KEEERRRAEE…ADSWRDRRGG (84 aa)) are compositionally biased toward basic and acidic residues. The segment at 810 to 1133 (KEEERRRAEE…DGWTDVKHHR (324 aa)) is disordered. The span at 895–909 (APAAAAQPNPAAQEA) shows a compositional bias: low complexity. 3 stretches are compositionally biased toward basic and acidic residues: residues 920–944 (GARE…RDVR), 954–1081 (VERR…DSAW), and 1097–1117 (TRQD…KEAR).

This sequence belongs to the eIF-3 subunit A family. In terms of assembly, component of the eukaryotic translation initiation factor 3 (eIF-3) complex.

The protein resides in the cytoplasm. RNA-binding component of the eukaryotic translation initiation factor 3 (eIF-3) complex, which is involved in protein synthesis of a specialized repertoire of mRNAs and, together with other initiation factors, stimulates binding of mRNA and methionyl-tRNAi to the 40S ribosome. The eIF-3 complex specifically targets and initiates translation of a subset of mRNAs involved in cell proliferation. In Aedes aegypti (Yellowfever mosquito), this protein is Eukaryotic translation initiation factor 3 subunit A.